We begin with the raw amino-acid sequence, 483 residues long: Regulatory protein ViaA (483 aa).

The protein belongs to the ViaA family. As to quaternary structure, homodimer. Interacts with RavA.

The protein localises to the cytoplasm. Functionally, component of the RavA-ViaA chaperone complex, which may act on the membrane to optimize the function of some of the respiratory chains. ViaA stimulates the ATPase activity of RavA. The sequence is that of Regulatory protein ViaA from Salmonella arizonae (strain ATCC BAA-731 / CDC346-86 / RSK2980).